The sequence spans 410 residues: Sprouty-related, EVH1 domain-containing protein 2 (410 aa).

The WH1 domain occupies 5 to 122 (THPDDDSYIV…RGVRKAIEDL (118 aa)). The disordered stretch occupies residues 127–171 (TTSSSTLHNEAELGDDDVFTTATDSSSNSSQKREPTTRTISSPTS). The segment covering 146–156 (TTATDSSSNSS) has biased composition (polar residues). Positions 197 to 252 (SYPQVTFPEDDEEIVRINPREKIWMTGYEDYRHAPVRGKYLDTTEDADSYVRFAKG) constitute a KBD domain. Phosphotyrosine occurs at positions 224 and 227. The disordered stretch occupies residues 274 to 294 (DPKGSVIKTQPPRAKSRRRKE). One can recognise an SPR domain in the interval 300-408 (RCVYCRDMFN…CRCCGGKHKA (109 aa)).

In terms of assembly, homodimer and heterodimer. Able to interact with SPRED1 to form heterodimers. Interacts with RAS. May interact with ZDHHC13 (via ANK repeats) and ZDHHC17 (via ANK repeats). Interacts with TESK1. Interacts with NF1. Phosphorylated on serine and threonine residues. Phosphorylated on tyrosine. Phosphorylation of Tyr-224 and Tyr-227 are required for ubiquitination. Post-translationally, ubiquitinated; leading to degradation by the proteasome. Predominantly expressed in lung, liver and testis. In testis, it is specially found in mature spermatids projecting into the lumen of the seminiferous. Strongly expressed in glandular epithelia. Also expressed in embryonic tissues such as heart, lung, liver and brain.

The protein localises to the cell membrane. It localises to the cytoplasmic vesicle. It is found in the secretory vesicle membrane. The protein resides in the cytoplasm. Functionally, negatively regulates Ras signaling pathways and downstream activation of MAP kinases. Recruits and translocates NF1 to the cell membrane, thereby enabling NF1-dependent hydrolysis of active GTP-bound Ras to inactive GDP-bound Ras. Inhibits fibroblast growth factor (FGF)-induced retinal lens fiber differentiation, probably by inhibiting FGF-mediated phosphorylation of ERK1/2. Inhibits TGFB-induced epithelial-to-mesenchymal transition in lens epithelial cells. This is Sprouty-related, EVH1 domain-containing protein 2 (Spred2) from Mus musculus (Mouse).